We begin with the raw amino-acid sequence, 333 residues long: MVREKIRVSTRTLKWKCVESRADSKRLYYGRFILSPLMKGQGDTIGIAMRKALLGEIEGTCITRAKSEKIPHEYSTIVGIQESVHEILMNLKEIVLRSNLYGTRDASICVKGPGCVTAQDIILPPSVEIVDNTQHIANLMEPINLCIELKIERNRGYHIQTPNNFQDASYPMDAIFMPVRNVNHSIHSYVNGNEKQEILFLEIWTNGSLTPKEALHEASRNLIDLFIPFLHAEEEKENFHLKNNKKKVTLPLFTFHEKLAKLRKKKKEIALKYIFIDQSELPPRIYNCLKRCNIHTLFDLLNNSPDELMKIKHFRIEDVKHILDILEMEKNFA.

The tract at residues 1–233 is alpha N-terminal domain (alpha-NTD); the sequence is MVREKIRVST…DLFIPFLHAE (233 aa). The segment at 269–333 is alpha C-terminal domain (alpha-CTD); that stretch reads IALKYIFIDQ…DILEMEKNFA (65 aa).

This sequence belongs to the RNA polymerase alpha chain family. As to quaternary structure, in plastids the minimal PEP RNA polymerase catalytic core is composed of four subunits: alpha, beta, beta', and beta''. When a (nuclear-encoded) sigma factor is associated with the core the holoenzyme is formed, which can initiate transcription.

The protein localises to the plastid. It localises to the chloroplast. It carries out the reaction RNA(n) + a ribonucleoside 5'-triphosphate = RNA(n+1) + diphosphate. DNA-dependent RNA polymerase catalyzes the transcription of DNA into RNA using the four ribonucleoside triphosphates as substrates. The polypeptide is DNA-directed RNA polymerase subunit alpha (Cucumis sativus (Cucumber)).